A 54-amino-acid polypeptide reads, in one-letter code: Ovomucoid (54 aa).

The Kazal-like domain occupies 4-54 (VDCSDYPKPVCSLEDMPLCGSDSKTYSNKCNFCNAVVDSNGTLTLSHFGKC). Disulfide bonds link Cys-6/Cys-36, Cys-14/Cys-33, and Cys-22/Cys-54. Asn-43 carries N-linked (GlcNAc...) asparagine glycosylation.

It is found in the secreted. In Vultur gryphus (Andean condor), this protein is Ovomucoid.